The primary structure comprises 252 residues: Biosynthetic peptidoglycan transglycosylase (252 aa).

A helical membrane pass occupies residues 23–43 (IGFLLGCIVAGVVAMQVYFFL).

The protein belongs to the glycosyltransferase 51 family.

Its subcellular location is the cell inner membrane. It catalyses the reaction [GlcNAc-(1-&gt;4)-Mur2Ac(oyl-L-Ala-gamma-D-Glu-L-Lys-D-Ala-D-Ala)](n)-di-trans,octa-cis-undecaprenyl diphosphate + beta-D-GlcNAc-(1-&gt;4)-Mur2Ac(oyl-L-Ala-gamma-D-Glu-L-Lys-D-Ala-D-Ala)-di-trans,octa-cis-undecaprenyl diphosphate = [GlcNAc-(1-&gt;4)-Mur2Ac(oyl-L-Ala-gamma-D-Glu-L-Lys-D-Ala-D-Ala)](n+1)-di-trans,octa-cis-undecaprenyl diphosphate + di-trans,octa-cis-undecaprenyl diphosphate + H(+). Its pathway is cell wall biogenesis; peptidoglycan biosynthesis. Its function is as follows. Peptidoglycan polymerase that catalyzes glycan chain elongation from lipid-linked precursors. The polypeptide is Biosynthetic peptidoglycan transglycosylase (Cupriavidus pinatubonensis (strain JMP 134 / LMG 1197) (Cupriavidus necator (strain JMP 134))).